Here is a 639-residue protein sequence, read N- to C-terminus: UvrABC system protein C (639 aa).

Residues 20 to 97 form the GIY-YIG domain; sequence ERSGVYRMFD…IKKFQPKFNI (78 aa). Residues 207 to 242 form the UVR domain; sequence KELQENLSRKMEELSSQMRFEEAAEIRDRIKALSYV.

It belongs to the UvrC family. As to quaternary structure, interacts with UvrB in an incision complex.

Its subcellular location is the cytoplasm. In terms of biological role, the UvrABC repair system catalyzes the recognition and processing of DNA lesions. UvrC both incises the 5' and 3' sides of the lesion. The N-terminal half is responsible for the 3' incision and the C-terminal half is responsible for the 5' incision. This Rickettsia conorii (strain ATCC VR-613 / Malish 7) protein is UvrABC system protein C.